The primary structure comprises 193 residues: Potassium-transporting ATPase KdpC subunit (193 aa).

The chain crosses the membrane as a helical span at residues 7–27; it reads PLVVLFVVLNAVTGLAYPAVM.

The protein belongs to the KdpC family. In terms of assembly, the system is composed of three essential subunits: KdpA, KdpB and KdpC.

Its subcellular location is the cell inner membrane. Functionally, part of the high-affinity ATP-driven potassium transport (or Kdp) system, which catalyzes the hydrolysis of ATP coupled with the electrogenic transport of potassium into the cytoplasm. This subunit acts as a catalytic chaperone that increases the ATP-binding affinity of the ATP-hydrolyzing subunit KdpB by the formation of a transient KdpB/KdpC/ATP ternary complex. The polypeptide is Potassium-transporting ATPase KdpC subunit (Burkholderia cenocepacia (strain HI2424)).